A 310-amino-acid polypeptide reads, in one-letter code: tRNA dimethylallyltransferase (310 aa).

9 to 16 serves as a coordination point for ATP; it reads GPTAVGKT. 11–16 contacts substrate; that stretch reads TAVGKT. Positions 34–37 are interaction with substrate tRNA; sequence DSMQ.

The protein belongs to the IPP transferase family. As to quaternary structure, monomer. Mg(2+) serves as cofactor.

It carries out the reaction adenosine(37) in tRNA + dimethylallyl diphosphate = N(6)-dimethylallyladenosine(37) in tRNA + diphosphate. Its function is as follows. Catalyzes the transfer of a dimethylallyl group onto the adenine at position 37 in tRNAs that read codons beginning with uridine, leading to the formation of N6-(dimethylallyl)adenosine (i(6)A). This chain is tRNA dimethylallyltransferase, found in Pediococcus pentosaceus (strain ATCC 25745 / CCUG 21536 / LMG 10740 / 183-1w).